Consider the following 84-residue polypeptide: Exodeoxyribonuclease 7 small subunit (84 aa).

It belongs to the XseB family. As to quaternary structure, heterooligomer composed of large and small subunits.

The protein localises to the cytoplasm. It carries out the reaction Exonucleolytic cleavage in either 5'- to 3'- or 3'- to 5'-direction to yield nucleoside 5'-phosphates.. Its function is as follows. Bidirectionally degrades single-stranded DNA into large acid-insoluble oligonucleotides, which are then degraded further into small acid-soluble oligonucleotides. This chain is Exodeoxyribonuclease 7 small subunit, found in Caulobacter vibrioides (strain ATCC 19089 / CIP 103742 / CB 15) (Caulobacter crescentus).